Reading from the N-terminus, the 545-residue chain is Threonine--tRNA ligase catalytic subunit (545 aa).

Positions 139–433 are catalytic; the sequence is DHRLIGEKLD…LLEHFKGKLP (295 aa). Zn(2+) is bound by residues cysteine 231, histidine 282, and histidine 410.

The protein belongs to the class-II aminoacyl-tRNA synthetase family. In terms of assembly, homodimer. Probably interacts with its editing subunit. The cofactor is Zn(2+).

It is found in the cytoplasm. The catalysed reaction is tRNA(Thr) + L-threonine + ATP = L-threonyl-tRNA(Thr) + AMP + diphosphate + H(+). Catalyzes the attachment of threonine to tRNA(Thr) in a two-step reaction: L-threonine is first activated by ATP to form Thr-AMP and then transferred to the acceptor end of tRNA(Thr). Also activates L-serine and transfers it to tRNA(Thr) but cannot deacylate incorrectly charged amino acid; unlike most archaea the editing function is found in a freestanding protein. The polypeptide is Threonine--tRNA ligase catalytic subunit (Saccharolobus islandicus (strain L.S.2.15 / Lassen #1) (Sulfolobus islandicus)).